The chain runs to 423 residues: MIKKEMIAMLLAGGQGSRLGVLTSKVAKPAVAFGGKYRIIDFPLSNCINSGIDTVGVLTQYQPLRLNTHIGIGIPWDLDRNVGGVSVLPPYEKSQNSEWYTGTANAIYQNLEYMEQYHPEYVLILSGDHIYKMDYKIMLDYHKANNADITIAAMPVPMEEASRFGVVVTDNDNKITEFEEKPEHPKSNLASMGIYIFSWKVLKDALIKLKDQQECDFGKHVIPYCFNNNKRIFAYEYNGYWKDVGTLSSYWEANMELIDIIPIFNLYEEFWKIYTKTDTIPPQYIAKDAYIEKSIIGDGTEVYGRVFNSVIGSGVVIEEGCVIRDSIIMNNSHIGKNTTITKSIIAEDVTIGENVELGVGEEAENVKFPKIYNSGLVTVGEWSVIPDNVKVGKNTAISGETTLQDYPNGELPGGGIIIKAGDN.

Residues Y100, G165, 180 to 181, and S191 contribute to the alpha-D-glucose 1-phosphate site; that span reads EK.

This sequence belongs to the bacterial/plant glucose-1-phosphate adenylyltransferase family. In terms of assembly, homotetramer.

The catalysed reaction is alpha-D-glucose 1-phosphate + ATP + H(+) = ADP-alpha-D-glucose + diphosphate. The protein operates within glycan biosynthesis; glycogen biosynthesis. In terms of biological role, involved in the biosynthesis of ADP-glucose, a building block required for the elongation reactions to produce glycogen. Catalyzes the reaction between ATP and alpha-D-glucose 1-phosphate (G1P) to produce pyrophosphate and ADP-Glc. This Lachnospira eligens (strain ATCC 27750 / DSM 3376 / VPI C15-48 / C15-B4) (Eubacterium eligens) protein is Glucose-1-phosphate adenylyltransferase.